The following is an 89-amino-acid chain: Small ribosomal subunit protein bS16 (89 aa).

The protein belongs to the bacterial ribosomal protein bS16 family.

This is Small ribosomal subunit protein bS16 from Desulforamulus reducens (strain ATCC BAA-1160 / DSM 100696 / MI-1) (Desulfotomaculum reducens).